Consider the following 156-residue polypeptide: Ribosomal RNA large subunit methyltransferase H (156 aa).

S-adenosyl-L-methionine is bound by residues Leu-73, Gly-104, and 123–128; that span reads LSKLTL.

Belongs to the RNA methyltransferase RlmH family. Homodimer.

Its subcellular location is the cytoplasm. The enzyme catalyses pseudouridine(1915) in 23S rRNA + S-adenosyl-L-methionine = N(3)-methylpseudouridine(1915) in 23S rRNA + S-adenosyl-L-homocysteine + H(+). Its function is as follows. Specifically methylates the pseudouridine at position 1915 (m3Psi1915) in 23S rRNA. This chain is Ribosomal RNA large subunit methyltransferase H, found in Hydrogenovibrio crunogenus (strain DSM 25203 / XCL-2) (Thiomicrospira crunogena).